The following is a 499-amino-acid chain: Cobyric acid synthase (499 aa).

Positions 251 to 442 (SLDIAVVSLK…LHGVFDNLEW (192 aa)) constitute a GATase cobBQ-type domain. Cysteine 332 functions as the Nucleophile in the catalytic mechanism. The active site involves histidine 434.

It belongs to the CobB/CobQ family. CobQ subfamily.

Its pathway is cofactor biosynthesis; adenosylcobalamin biosynthesis. Catalyzes amidations at positions B, D, E, and G on adenosylcobyrinic A,C-diamide. NH(2) groups are provided by glutamine, and one molecule of ATP is hydrogenolyzed for each amidation. In Streptococcus sanguinis (strain SK36), this protein is Cobyric acid synthase.